The sequence spans 276 residues: Molybdenum storage protein subunit alpha (276 aa).

Octamer consisting of 4 alpha and 4 beta chains.

Its subcellular location is the cytoplasm. In terms of biological role, intracellular storage of molybdenum. Binds polyoxomolybdates. Can bind at least 90 molybdenum atoms per protein molecule. This chain is Molybdenum storage protein subunit alpha, found in Azotobacter vinelandii (strain DJ / ATCC BAA-1303).